A 75-amino-acid polypeptide reads, in one-letter code: Large ribosomal subunit protein bL31c (75 aa).

It belongs to the bacterial ribosomal protein bL31 family. Type A subfamily. As to quaternary structure, part of the 50S ribosomal subunit.

It is found in the plastid. It localises to the chloroplast. Its function is as follows. Binds the 23S rRNA. The protein is Large ribosomal subunit protein bL31c of Cyanidium caldarium (Red alga).